Consider the following 100-residue polypeptide: SAGA-associated factor 11 (100 aa).

The SGF11-type zinc-finger motif lies at 73–94; it reads FQCENCGRSIAGGRFAQHMTKC.

The protein belongs to the SGF11 family. In terms of assembly, component of the 1.8 MDa SAGA transcription coactivator-HAT complex. SAGA is built of 5 distinct domains with specialized functions. Within the SAGA complex, SUS1, SGF11, SGF73 and UBP8 form an additional subcomplex of SAGA called the DUB module (deubiquitination module). Interacts directly with SGF73, SUS1 and UBP8.

It is found in the nucleus. Its function is as follows. Functions as a component of the transcription regulatory histone acetylation (HAT) complex SAGA. At the promoters, SAGA is required for recruitment of the basal transcription machinery. It influences RNA polymerase II transcriptional activity through different activities such as TBP interaction and promoter selectivity, interaction with transcription activators, and chromatin modification through histone acetylation and deubiquitination. SAGA acetylates nucleosomal histone H3 to some extent (to form H3K9ac, H3K14ac, H3K18ac and H3K23ac). SAGA interacts with DNA via upstream activating sequences (UASs). Involved in transcriptional regulation of a subset of SAGA-regulated genes. Within the SAGA complex, participates in a subcomplex, that specifically deubiquitinates histones H2B. This chain is SAGA-associated factor 11, found in Debaryomyces hansenii (strain ATCC 36239 / CBS 767 / BCRC 21394 / JCM 1990 / NBRC 0083 / IGC 2968) (Yeast).